The primary structure comprises 262 residues: Acyl-[acyl-carrier-protein]--UDP-N-acetylglucosamine O-acyltransferase (262 aa).

It belongs to the transferase hexapeptide repeat family. LpxA subfamily. As to quaternary structure, homotrimer.

The protein resides in the cytoplasm. It catalyses the reaction a (3R)-hydroxyacyl-[ACP] + UDP-N-acetyl-alpha-D-glucosamine = a UDP-3-O-[(3R)-3-hydroxyacyl]-N-acetyl-alpha-D-glucosamine + holo-[ACP]. The protein operates within glycolipid biosynthesis; lipid IV(A) biosynthesis; lipid IV(A) from (3R)-3-hydroxytetradecanoyl-[acyl-carrier-protein] and UDP-N-acetyl-alpha-D-glucosamine: step 1/6. Involved in the biosynthesis of lipid A, a phosphorylated glycolipid that anchors the lipopolysaccharide to the outer membrane of the cell. The protein is Acyl-[acyl-carrier-protein]--UDP-N-acetylglucosamine O-acyltransferase of Yersinia pseudotuberculosis serotype O:1b (strain IP 31758).